A 365-amino-acid polypeptide reads, in one-letter code: Flagellar P-ring protein (365 aa).

The signal sequence occupies residues 1-21 (MKSLRLVALFCCLLPLGMAHA).

The protein belongs to the FlgI family. The basal body constitutes a major portion of the flagellar organelle and consists of four rings (L,P,S, and M) mounted on a central rod.

It is found in the periplasm. The protein resides in the bacterial flagellum basal body. Functionally, assembles around the rod to form the L-ring and probably protects the motor/basal body from shearing forces during rotation. The chain is Flagellar P-ring protein from Aeromonas hydrophila subsp. hydrophila (strain ATCC 7966 / DSM 30187 / BCRC 13018 / CCUG 14551 / JCM 1027 / KCTC 2358 / NCIMB 9240 / NCTC 8049).